A 969-amino-acid polypeptide reads, in one-letter code: Leucine--tRNA ligase (969 aa).

Residues Pro-46–His-56 carry the 'HIGH' region motif. The 'KMSKS' region motif lies at Lys-658–Ser-662. Position 661 (Lys-661) interacts with ATP.

The protein belongs to the class-I aminoacyl-tRNA synthetase family.

It localises to the cytoplasm. It catalyses the reaction tRNA(Leu) + L-leucine + ATP = L-leucyl-tRNA(Leu) + AMP + diphosphate. In Methanococcus aeolicus (strain ATCC BAA-1280 / DSM 17508 / OCM 812 / Nankai-3), this protein is Leucine--tRNA ligase.